Here is a 156-residue protein sequence, read N- to C-terminus: Small ribosomal subunit protein uS7 (156 aa).

This sequence belongs to the universal ribosomal protein uS7 family. Part of the 30S ribosomal subunit. Contacts proteins S9 and S11.

One of the primary rRNA binding proteins, it binds directly to 16S rRNA where it nucleates assembly of the head domain of the 30S subunit. Is located at the subunit interface close to the decoding center, probably blocks exit of the E-site tRNA. This is Small ribosomal subunit protein uS7 from Deinococcus radiodurans (strain ATCC 13939 / DSM 20539 / JCM 16871 / CCUG 27074 / LMG 4051 / NBRC 15346 / NCIMB 9279 / VKM B-1422 / R1).